The sequence spans 92 residues: MPRSLKKGPFVANHLLRKIEKMNGKGEKHVITTWSRASTIIPIMIGHTIAIHNGKSHLPIFINDRMIGHKLGEFVLTRNYRGHGKTDKKARR.

The protein belongs to the universal ribosomal protein uS19 family.

It localises to the plastid. The protein localises to the chloroplast. Functionally, protein S19 forms a complex with S13 that binds strongly to the 16S ribosomal RNA. The polypeptide is Small ribosomal subunit protein uS19c (Nephroselmis olivacea (Green alga)).